A 269-amino-acid chain; its full sequence is Phosphate import ATP-binding protein PstB (269 aa).

One can recognise an ABC transporter domain in the interval 21–264; sequence IEIKDFNFFY…PKDRRTENYI (244 aa). Residue 55–62 coordinates ATP; it reads GPSGCGKT.

Belongs to the ABC transporter superfamily. Phosphate importer (TC 3.A.1.7) family. As to quaternary structure, the complex is composed of two ATP-binding proteins (PstB), two transmembrane proteins (PstC and PstA) and a solute-binding protein (PstS).

The protein resides in the cell membrane. It catalyses the reaction phosphate(out) + ATP + H2O = ADP + 2 phosphate(in) + H(+). Its function is as follows. Part of the ABC transporter complex PstSACB involved in phosphate import. Responsible for energy coupling to the transport system. This chain is Phosphate import ATP-binding protein PstB, found in Mycoplasma capricolum subsp. capricolum (strain California kid / ATCC 27343 / NCTC 10154).